The chain runs to 611 residues: DNA mismatch repair protein MutL (611 aa).

A disordered region spans residues 364–384 (NVNSKPSKYRPATSPTVPKYT).

Belongs to the DNA mismatch repair MutL/HexB family.

Functionally, this protein is involved in the repair of mismatches in DNA. It is required for dam-dependent methyl-directed DNA mismatch repair. May act as a 'molecular matchmaker', a protein that promotes the formation of a stable complex between two or more DNA-binding proteins in an ATP-dependent manner without itself being part of a final effector complex. This Rickettsia bellii (strain OSU 85-389) protein is DNA mismatch repair protein MutL.